Here is a 225-residue protein sequence, read N- to C-terminus: Membrane protein (225 aa).

At 1 to 20 (MSNETNCTLDFEQSVELFKE) the chain is on the virion surface side. A helical membrane pass occupies residues 21–41 (YNLFITAFLLFLTIILQYGYA). At 42 to 51 (TRSKFIYILK) the chain is on the intravirion side. A helical transmembrane segment spans residues 52-72 (MIVLWCFWPLNIAVGVISCIY). At 73–77 (PPNTG) the chain is on the virion surface side. The helical transmembrane segment at 78–98 (GLVAAIILTVFACLSFVGYWI) threads the bilayer. At 99–225 (QSIRLFKRCR…VATGGSSLYT (127 aa)) the chain is on the intravirion side.

The protein belongs to the gammacoronaviruses M protein family. As to quaternary structure, homomultimer. Interacts with envelope E protein in the budding compartment of the host cell, which is located between endoplasmic reticulum and the Golgi complex. Forms a complex with HE and S proteins. Interacts with nucleocapsid N protein. This interaction probably participates in RNA packaging into the virus.

It localises to the virion membrane. It is found in the host Golgi apparatus membrane. Functionally, component of the viral envelope that plays a central role in virus morphogenesis and assembly via its interactions with other viral proteins. This chain is Membrane protein, found in Gallus gallus (Chicken).